The following is a 387-amino-acid chain: Galactokinase (387 aa).

Residue 33 to 36 (EHTD) coordinates substrate. ATP contacts are provided by residues serine 67 and 123 to 129 (GAGLSSS). Serine 129 and glutamate 161 together coordinate Mg(2+). Catalysis depends on aspartate 173, which acts as the Proton acceptor. Tyrosine 223 serves as a coordination point for substrate.

It belongs to the GHMP kinase family. GalK subfamily.

It is found in the cytoplasm. It catalyses the reaction alpha-D-galactose + ATP = alpha-D-galactose 1-phosphate + ADP + H(+). It functions in the pathway carbohydrate metabolism; galactose metabolism. Its function is as follows. Catalyzes the transfer of the gamma-phosphate of ATP to D-galactose to form alpha-D-galactose-1-phosphate (Gal-1-P). The chain is Galactokinase from Lacticaseibacillus casei (Lactobacillus casei).